A 156-amino-acid chain; its full sequence is Endogenous retrovirus group K member 6 Pro protein (156 aa).

Positions 21–96 (FEGLVDTGAD…IPLNLWGRDL (76 aa)) constitute a Peptidase A2 domain. The active site involves Asp-26. A G-patch domain is found at 111–156 (YSPTSQKIMTKMGYIPGKGLGKNEDGIKIPVEAKINQEREGIGNPC).

The protein belongs to the peptidase A2 family. HERV class-II K(HML-2) subfamily. In terms of assembly, active as a homodimer. Autoproteolytically processed at the N-terminus. Expected C-terminal autoprocessing not detected. The sequence shown is that of the processed Pro protein.

It catalyses the reaction Processing at the authentic HIV-1 PR recognition site and release of the mature p17 matrix and the p24 capsid protein, as a result of the cleavage of the -SQNY-|-PIVQ- cleavage site.. Functionally, retroviral proteases have roles in the processing of the primary translation products and the maturation of the viral particle. Endogenous Pro proteins may have kept, lost or modified their original function during evolution. The sequence is that of Endogenous retrovirus group K member 6 Pro protein (ERVK-6) from Homo sapiens (Human).